We begin with the raw amino-acid sequence, 665 residues long: MGDILAHESELLGLVKEYLDFAEFEDTLKTFSKECKIKGKPLCKTVGGSFRDSKSLTIQKDLVTAFDNGDQKVFFNLWEEHIPSSVRDGDSFAQRLEFYLHIHFAIYLLKYSVGRPDKEELDEKISYFKTYLETKGAALSQTTEFLPFYALPFVPNPMVHPSFKELFQDSWTPELKMKLEKFLALIFKASNTPKLLTIYKENGQSNKEMLQQLHQQLVEAERRSMTYLKRYNKIQADYHNLIGVTAELVDSLEATVSGKMITPEYLQSVCVRLFSNQMRQSLAHSVDFTRPGTASTMLRASLAPVKLKDVPLLPSLDYEKLKKDLILGSDRLKAFLLQALRWRLTTSHPGEQRETVLQAYISNDLLDCYSHNQRSVLQLLHSKSDVVRQYMARLINAFASLAEGRLYLAQNTKVLRMLEGRLKEEDKDIITRENVLGALQKFSLRRPLQTAMIQDGLIFWLVDVLKDPDCLSDYTLEYSVALLMNLCLRSTGKNMCAKVAGLVLKVLSDLLGHENHEIQPYVSGALYSILSVPSIREEARAMGMEDILRCFIKEGNAEMIRQIEFIIKQLNSEELPDGVLESDDDEDEDDEEDHDIMEADLDKDELIQPQLGELSGEKLLTTEYLGIMTNTGKMRRKGLANVQWSGDEPLQRPVTPGGHRNGYPV.

One can recognise a LisH domain in the interval 7 to 39; it reads HESELLGLVKEYLDFAEFEDTLKTFSKECKIKG. Residues 201–235 adopt a coiled-coil conformation; that stretch reads ENGQSNKEMLQQLHQQLVEAERRSMTYLKRYNKIQ. Residue Ser-582 is modified to Phosphoserine. Residues 642-665 form a disordered region; sequence VQWSGDEPLQRPVTPGGHRNGYPV.

In terms of assembly, interacts with TOGARAM1, CCDC66, CEP104, CSPP1 and CEP290. Interacts with NDUFAF2.

Its subcellular location is the cytoplasm. It localises to the cytoskeleton. The protein localises to the cilium basal body. The protein resides in the cell projection. It is found in the cilium. Its subcellular location is the microtubule organizing center. It localises to the centrosome. The protein localises to the centriole. Functionally, involved in ciliogenesis. It is required for appropriate acetylation and polyglutamylation of ciliary microtubules, and regulation of cilium length. Acts as a positive regulator of hedgehog (Hh)signaling. May participate in the trafficking and/or retention of GLI2 and GLI3 proteins at the ciliary tip. This is LisH domain-containing protein ARMC9 (ARMC9) from Pongo abelii (Sumatran orangutan).